Reading from the N-terminus, the 283-residue chain is MFS-type transporter eupM (283 aa).

Helical transmembrane passes span 68-88 (LVAWLQVLGAWVLFFNTWGAM), 111-131 (IAWIGSIQTFCLQAMGLVAGP), 136-156 (GGFKILIVTGSVGVVSGYMML), 165-185 (VLLAQGFLIGIAEGCLFTPMI), 196-216 (IGLATGIASSGSSMGGVVYPI), 227-247 (FAWTTRVLGFISLGMLLIPII), and 263-283 (LIDLSVFTDWPFIVFVIATMI).

The protein belongs to the major facilitator superfamily. Monocarboxylate porter (TC 2.A.1.13) family.

It is found in the membrane. Its function is as follows. MFS-type transporter; part of the gene cluster that mediates the biosynthesis of eupenifeldin, a bistropolone meroterpenoid that acts as an antitumor agent. The polypeptide is MFS-type transporter eupM (Phoma sp).